A 179-amino-acid polypeptide reads, in one-letter code: Large ribosomal subunit protein uL6 (179 aa).

It belongs to the universal ribosomal protein uL6 family. Part of the 50S ribosomal subunit.

In terms of biological role, this protein binds to the 23S rRNA, and is important in its secondary structure. It is located near the subunit interface in the base of the L7/L12 stalk, and near the tRNA binding site of the peptidyltransferase center. In Mycolicibacterium gilvum (strain PYR-GCK) (Mycobacterium gilvum (strain PYR-GCK)), this protein is Large ribosomal subunit protein uL6.